A 452-amino-acid polypeptide reads, in one-letter code: DNA primase DnaG (452 aa).

In terms of domain architecture, Toprim spans 172–248; it reads DTVIIVEGRA…DIDYIARAPP (77 aa). Mg(2+)-binding residues include glutamate 178, aspartate 222, and aspartate 224. The tract at residues 289-320 is disordered; it reads KKQIEQAQVQPSAAPTSPQPQPESTQPTQPIQ. The span at 294–320 shows a compositional bias: low complexity; sequence QAQVQPSAAPTSPQPQPESTQPTQPIQ.

The protein belongs to the archaeal DnaG primase family. Forms a ternary complex with MCM helicase and DNA. Component of the archaeal exosome complex. Requires Mg(2+) as cofactor.

It catalyses the reaction ssDNA + n NTP = ssDNA/pppN(pN)n-1 hybrid + (n-1) diphosphate.. In terms of biological role, RNA polymerase that catalyzes the synthesis of short RNA molecules used as primers for DNA polymerase during DNA replication. Also part of the exosome, which is a complex involved in RNA degradation. Acts as a poly(A)-binding protein that enhances the interaction between heteromeric, adenine-rich transcripts and the exosome. This chain is DNA primase DnaG, found in Caldivirga maquilingensis (strain ATCC 700844 / DSM 13496 / JCM 10307 / IC-167).